Reading from the N-terminus, the 291-residue chain is MGVVVVNVMTLLDQNNALPRTSVDASPALWSFLLRQCRILASEPLGTPVVVRPANLRRLAEPLMDLPKPTRPIVRTRSCRCPPNTTTGLFAEDSPLESTEVVDAVACFRLLHRDQPSPPRLYHLWVVGAADLCVPFLEYAQKIRLGVRFIAIKTPDAWVGEPWAVPTRFLPEWTVAWTPFPAAPNHPLETLLSRYEYQYGVVLPGTNGRERDCMRWLRSLIALHKPHPATPGPLTTSHPVRRPCCACMGMPEVPDEQPTSPGRGPQETDPLIAVRGERPRLPHICYPVTTL.

Residue Gly2 is modified to N-acetylglycine; by host; partial. The disordered stretch occupies residues 251–270; the sequence is PEVPDEQPTSPGRGPQETDP.

The protein belongs to the herpesviridae HHV-1 US2 protein family. As to quaternary structure, interacts with host KRT18.

Its subcellular location is the host cytoplasm. The protein localises to the host nucleus. The sequence is that of Protein US2 from Homo sapiens (Human).